The following is a 250-amino-acid chain: Triosephosphate isomerase (250 aa).

Asn9 to Lys11 provides a ligand contact to substrate. His96 acts as the Electrophile in catalysis. Glu166 acts as the Proton acceptor in catalysis. Substrate is bound by residues Gly172, Ser212, and Gly233–Gly234.

Belongs to the triosephosphate isomerase family. Homodimer.

The protein localises to the cytoplasm. The enzyme catalyses D-glyceraldehyde 3-phosphate = dihydroxyacetone phosphate. Its pathway is carbohydrate biosynthesis; gluconeogenesis. The protein operates within carbohydrate degradation; glycolysis; D-glyceraldehyde 3-phosphate from glycerone phosphate: step 1/1. Its function is as follows. Involved in the gluconeogenesis. Catalyzes stereospecifically the conversion of dihydroxyacetone phosphate (DHAP) to D-glyceraldehyde-3-phosphate (G3P). In Chlorobium phaeovibrioides (strain DSM 265 / 1930) (Prosthecochloris vibrioformis (strain DSM 265)), this protein is Triosephosphate isomerase.